The following is a 352-amino-acid chain: Rhodopsin (352 aa).

Topologically, residues 1-36 are extracellular; the sequence is MNGTEGPFFYIPMVNTTGVVRSPYEYPQYYLVNPAA. Asn-2 and Asn-15 each carry an N-linked (GlcNAc...) asparagine glycan. The chain crosses the membrane as a helical span at residues 37-61; the sequence is YACLGAYMFFLILVGFPVNFLTLYV. Topologically, residues 62–73 are cytoplasmic; the sequence is TLEHKKLRTPLN. Residues 74 to 96 traverse the membrane as a helical segment; it reads YILLNLAVADLFMVFGGFTTTIY. Residues 97-110 are Extracellular-facing; that stretch reads TSMHGYFVLGRLGC. Cys-110 and Cys-187 are oxidised to a cystine. The chain crosses the membrane as a helical span at residues 111-133; sequence NIEGFFATLGGEIALWSLVVLAI. Residues 134 to 136 carry the 'Ionic lock' involved in activated form stabilization motif; that stretch reads ERW. At 134-152 the chain is on the cytoplasmic side; the sequence is ERWVVVCKPISNFRFGENH. Residues 153–173 form a helical membrane-spanning segment; that stretch reads AIMGVAFTWFMASACAVPPLV. The Extracellular portion of the chain corresponds to 174–202; it reads GWSRYIPEGMQCSCGIDYYTRAEGFNNES. The N-linked (GlcNAc...) asparagine glycan is linked to Asn-200. Residues 203–224 traverse the membrane as a helical segment; that stretch reads FVIYMFTVHFCIPLAVVGFCYG. The Cytoplasmic portion of the chain corresponds to 225–252; the sequence is RLLCAVKEAAAAQQESETTQRAEREVSR. The helical transmembrane segment at 253 to 274 threads the bilayer; that stretch reads MVVIMVIGFLVCWLPYASVAWY. The Extracellular portion of the chain corresponds to 275 to 286; sequence IFTHQGSEFGPL. The helical transmembrane segment at 287–308 threads the bilayer; that stretch reads FMTIPAFFAKSSSIYNPMIYIC. Lys-296 is modified (N6-(retinylidene)lysine). Residues 309 to 352 lie on the Cytoplasmic side of the membrane; that stretch reads MNKQFRHCMITTLCCGKNPFEEEEGASTTKTEASSVSSSSVSPA. S-palmitoyl cysteine attachment occurs at residues Cys-322 and Cys-323. The interval 331 to 352 is disordered; the sequence is EEGASTTKTEASSVSSSSVSPA. Over residues 342-352 the composition is skewed to low complexity; it reads SSVSSSSVSPA.

This sequence belongs to the G-protein coupled receptor 1 family. Opsin subfamily. In terms of processing, phosphorylated on some or all of the serine and threonine residues present in the C-terminal region. Contains one covalently linked retinal chromophore.

It is found in the membrane. Its subcellular location is the cell projection. The protein resides in the cilium. The protein localises to the photoreceptor outer segment. Functionally, photoreceptor required for image-forming vision at low light intensity. While most salt water fish species use retinal as chromophore, most freshwater fish use 3-dehydroretinal, or a mixture of retinal and 3-dehydroretinal. Light-induced isomerization of 11-cis to all-trans retinal triggers a conformational change that activates signaling via G-proteins. Subsequent receptor phosphorylation mediates displacement of the bound G-protein alpha subunit by arrestin and terminates signaling. This Gobius niger (Black goby) protein is Rhodopsin (rho).